We begin with the raw amino-acid sequence, 418 residues long: uncharacterized protein (418 aa).

This is an uncharacterized protein from Ictalurid herpesvirus 1 (strain Auburn) (IcHV-1).